Consider the following 383-residue polypeptide: Agmatine deiminase (383 aa).

Residues Asp-220 and Asp-226 each coordinate agmatine. Residue Cys-366 is the Amidino-cysteine intermediate of the active site.

The protein belongs to the agmatine deiminase family. As to quaternary structure, forms homodimers.

The catalysed reaction is agmatine + H2O = N-carbamoylputrescine + NH4(+). It functions in the pathway amine and polyamine biosynthesis; putrescine biosynthesis via agmatine pathway; N-carbamoylputrescine from agmatine: step 1/1. Its activity is regulated as follows. Inhibited by N-ethylmaleimide and iodoacetamide. Mediates the hydrolysis of agmatine into N-carbamoylputrescine in the arginine decarboxylase (ADC) pathway of putrescine biosynthesis, a basic polyamine. This Arabidopsis thaliana (Mouse-ear cress) protein is Agmatine deiminase (AIH).